Here is a 156-residue protein sequence, read N- to C-terminus: Small ribosomal subunit protein uS7c (156 aa).

It belongs to the universal ribosomal protein uS7 family. Part of the 30S ribosomal subunit.

The protein resides in the plastid. Its subcellular location is the chloroplast. Its function is as follows. One of the primary rRNA binding proteins, it binds directly to 16S rRNA where it nucleates assembly of the head domain of the 30S subunit. The polypeptide is Small ribosomal subunit protein uS7c (rps7) (Guillardia theta (Cryptophyte)).